Here is a 350-residue protein sequence, read N- to C-terminus: Biotin synthase (350 aa).

One can recognise a Radical SAM core domain in the interval 38–256; sequence NYVQVSTLLS…IAIARIMMPQ (219 aa). [4Fe-4S] cluster-binding residues include Cys-53, Cys-57, and Cys-60. The [2Fe-2S] cluster site is built by Cys-97, Cys-128, Cys-188, and Arg-260.

It belongs to the radical SAM superfamily. Biotin synthase family. In terms of assembly, homodimer. [4Fe-4S] cluster serves as cofactor. [2Fe-2S] cluster is required as a cofactor.

The enzyme catalyses (4R,5S)-dethiobiotin + (sulfur carrier)-SH + 2 reduced [2Fe-2S]-[ferredoxin] + 2 S-adenosyl-L-methionine = (sulfur carrier)-H + biotin + 2 5'-deoxyadenosine + 2 L-methionine + 2 oxidized [2Fe-2S]-[ferredoxin]. It functions in the pathway cofactor biosynthesis; biotin biosynthesis; biotin from 7,8-diaminononanoate: step 2/2. Its function is as follows. Catalyzes the conversion of dethiobiotin (DTB) to biotin by the insertion of a sulfur atom into dethiobiotin via a radical-based mechanism. The sequence is that of Biotin synthase from Vibrio campbellii (strain ATCC BAA-1116).